The following is a 292-amino-acid chain: Histamine N-methyltransferase (292 aa).

Residue Glu28 participates in substrate binding. Residues Gly60, Glu89, Gln94, Ser120, and Ile142 each contribute to the S-adenosyl-L-methionine site. Asn283 lines the substrate pocket.

It belongs to the class I-like SAM-binding methyltransferase superfamily. HNMT family. In terms of assembly, monomer. As to expression, expressed in jejunum, brain &gt; lung, spleen, stomach &gt; liver, kidney.

It localises to the cytoplasm. It catalyses the reaction histamine + S-adenosyl-L-methionine = N(tau)-methylhistamine + S-adenosyl-L-homocysteine + H(+). In terms of biological role, inactivates histamine by N-methylation. Plays an important role in degrading histamine and in regulating the airway response to histamine. The sequence is that of Histamine N-methyltransferase (HNMT) from Cavia porcellus (Guinea pig).